A 187-amino-acid chain; its full sequence is Transmembrane protein 17A (187 aa).

The next 4 helical transmembrane spans lie at 49–69 (IFLY…VIML), 82–102 (FILV…LYLG), 114–134 (LAGF…FLLC), and 146–166 (AVHG…IFAL).

This sequence belongs to the TMEM17 family. Part of the tectonic-like complex (also named B9 complex).

The protein localises to the cell projection. It is found in the cilium membrane. Transmembrane component of the tectonic-like complex, a complex localized at the transition zone of primary cilia and acting as a barrier that prevents diffusion of transmembrane proteins between the cilia and plasma membranes. Required for ciliogenesis and sonic hedgehog/SHH signaling. The protein is Transmembrane protein 17A (tmem17-a) of Xenopus tropicalis (Western clawed frog).